The chain runs to 511 residues: Serine/threonine-protein kinase Nek3 (511 aa).

N-acetylmethionine is present on Met1. Residues 1 to 282 (MDNYTVLRVI…EQILDEIKIS (282 aa)) form an interaction with VAV2 region. The Protein kinase domain maps to 4-255 (YTVLRVIGQG…ATTLLCRGSL (252 aa)). ATP contacts are provided by residues 10–18 (IGQGSFGRA) and Lys33. Asp125 serves as the catalytic Proton acceptor. Thr159 carries the phosphothreonine; by autocatalysis modification. Disordered stretches follow at residues 299 to 370 (LGEA…GPSS) and 443 to 511 (GPLS…GERA). The segment covering 309-321 (EEERGRKCSHTEL) has biased composition (basic and acidic residues). Positions 472–485 (LDEEDTDFEEDNEN) are enriched in acidic residues. Thr477 bears the Phosphothreonine mark. Positions 498–511 (YGDGPGGQLLGERA) are enriched in gly residues.

Belongs to the protein kinase superfamily. NEK Ser/Thr protein kinase family. NIMA subfamily. Interacts with PXN, PRLR, VAV1 and VAV2 and this interaction is prolactin-dependent. Requires Mg(2+) as cofactor. In terms of processing, phosphorylation at Thr-477 regulates its catalytic activity. In terms of tissue distribution, brain.

It is found in the cytoplasm. Its subcellular location is the cell projection. The protein localises to the axon. The enzyme catalyses L-seryl-[protein] + ATP = O-phospho-L-seryl-[protein] + ADP + H(+). It catalyses the reaction L-threonyl-[protein] + ATP = O-phospho-L-threonyl-[protein] + ADP + H(+). In terms of biological role, protein kinase which influences neuronal morphogenesis and polarity through effects on microtubules. Regulates microtubule acetylation in neurons. Contributes to prolactin-mediated phosphorylation of PXN and VAV2. The polypeptide is Serine/threonine-protein kinase Nek3 (Nek3) (Mus musculus (Mouse)).